The following is an 808-amino-acid chain: Zinc finger protein 148 (808 aa).

Disordered regions lie at residues 15-86 and 131-162; these read SPVG…ISQD and DSLI…SPAK. Positions 56-73 are enriched in acidic residues; that stretch reads AEDDDDEDEEEDDDDDLA. A compositionally biased stretch (basic residues) spans 150–159; the sequence is HKKKKRKQRS. C2H2-type zinc fingers lie at residues 180 to 202, 208 to 230, 236 to 258, and 264 to 287; these read HICE…VFIH, FQCN…EKIH, FRCD…KRTH, and YQCD…RMCH. 3 disordered regions span residues 305–338, 596–617, and 705–736; these read RTPE…ASIT, SINS…QAPP, and SFSG…DPQS. Polar residues-rich tracts occupy residues 705 to 718 and 725 to 736; these read SFSG…SVSP and QVTSPKKTDPQS.

Belongs to the krueppel C2H2-type zinc-finger protein family.

The protein localises to the nucleus. In terms of biological role, involved in transcriptional regulation. Represses the transcription of a number of genes. Required for primitive and definitive hematopoiesis during embryonic development. The chain is Zinc finger protein 148 (znf148) from Danio rerio (Zebrafish).